Consider the following 166-residue polypeptide: Probable chemoreceptor glutamine deamidase CheD (166 aa).

It belongs to the CheD family.

The catalysed reaction is L-glutaminyl-[protein] + H2O = L-glutamyl-[protein] + NH4(+). In terms of biological role, probably deamidates glutamine residues to glutamate on methyl-accepting chemotaxis receptors (MCPs), playing an important role in chemotaxis. This chain is Probable chemoreceptor glutamine deamidase CheD, found in Desulforamulus reducens (strain ATCC BAA-1160 / DSM 100696 / MI-1) (Desulfotomaculum reducens).